The sequence spans 448 residues: N-succinylarginine dihydrolase (448 aa).

Substrate is bound by residues 19-28 (GGLSYGNVAS), Asn-110, and 137-138 (HR). Glu-174 is a catalytic residue. Arg-214 contacts substrate. The active site involves His-250. Residues Asp-252 and Asn-365 each contribute to the substrate site. Catalysis depends on Cys-371, which acts as the Nucleophile.

The protein belongs to the succinylarginine dihydrolase family. Homodimer.

It catalyses the reaction N(2)-succinyl-L-arginine + 2 H2O + 2 H(+) = N(2)-succinyl-L-ornithine + 2 NH4(+) + CO2. Its pathway is amino-acid degradation; L-arginine degradation via AST pathway; L-glutamate and succinate from L-arginine: step 2/5. In terms of biological role, catalyzes the hydrolysis of N(2)-succinylarginine into N(2)-succinylornithine, ammonia and CO(2). This chain is N-succinylarginine dihydrolase, found in Pseudomonas aeruginosa (strain UCBPP-PA14).